A 479-amino-acid polypeptide reads, in one-letter code: PRAME family member 19 (479 aa).

The LRR 1 repeat unit spans residues 15–38 (QSLLRDQALAISVLDELPRELFPR). One copy of the LRR 1; degenerate repeat lies at 97-124 (RWKLQVLEMRDVDENFWTIWSGARPLSC). The LRR 2; degenerate repeat unit spans residues 179–203 (HLCCTKVVNYSMNILNFRNILETVY). The stretch at 204 to 230 (PDSIQVLEIWNMCWPCMVAEVSRYLSQ) is one LRR 3; degenerate repeat. One copy of the LRR 4; degenerate repeat lies at 231 to 265 (MKNLRKLFISDGCGYLPSFESQGQLVAEFSSVFLR). 5 LRR repeats span residues 266–291 (LEYL…IRCL), 292–323 (KSPL…SQLK), 324–342 (QLNL…PLRA), 348–375 (AATL…ALSR), and 376–400 (CSNL…LLRH).

The protein belongs to the PRAME family.

This chain is PRAME family member 19, found in Homo sapiens (Human).